The sequence spans 880 residues: Leucine--tRNA ligase (880 aa).

Positions 46–56 match the 'HIGH' region motif; sequence PYPSGALHMGH. A 'KMSKS' region motif is present at residues 638–642; sequence KMSKS. Lys-641 contributes to the ATP binding site.

Belongs to the class-I aminoacyl-tRNA synthetase family.

The protein localises to the cytoplasm. The enzyme catalyses tRNA(Leu) + L-leucine + ATP = L-leucyl-tRNA(Leu) + AMP + diphosphate. This Xanthomonas oryzae pv. oryzae (strain MAFF 311018) protein is Leucine--tRNA ligase.